Reading from the N-terminus, the 118-residue chain is Large ribosomal subunit protein bL20 (118 aa).

It belongs to the bacterial ribosomal protein bL20 family.

Binds directly to 23S ribosomal RNA and is necessary for the in vitro assembly process of the 50S ribosomal subunit. It is not involved in the protein synthesizing functions of that subunit. The protein is Large ribosomal subunit protein bL20 of Marinomonas sp. (strain MWYL1).